Here is a 377-residue protein sequence, read N- to C-terminus: MSILFKIFASTLAVVSVVNAGELLNFENERDIIRGSYIVVMKDGTSSSDLKSHMNWAANVHHGNLAKQGPSRSIGFQFSFDIGGWRGYSGKFDNDTLNAIVNNAHVKYVEPDRMASATVLKIQKNAPSWGLGRISHTFRGFKNYLYHSSAGEGVLAYVVDTGIDINHPEFEGRAEWGINVVDEVDTDEHGHGTHVAGTIGSKTFGVAKKVKLVAVKALGKDSRGPDSGIIAAMDWAVKHAKERGILGKAIMNLSLTGDTATALNEAAERAVEEGLFLGVAAGNNNRDAINESPASVETVCTAGASAENDEKASFSNFGSLRTSMAAPHVCGVAALLMSSEGIKAQEACDRIKKLARPAIRNPGNSTTNKLLYNKSGF.

The signal sequence occupies residues 1–20 (MSILFKIFASTLAVVSVVNA). A propeptide spanning residues 21 to 118 (GELLNFENER…VEPDRMASAT (98 aa)) is cleaved from the precursor. One can recognise an Inhibitor I9 domain in the interval 36–114 (SYIVVMKDGT…HVKYVEPDRM (79 aa)). Positions 128–377 (SWGLGRISHT…NKLLYNKSGF (250 aa)) constitute a Peptidase S8 domain. Active-site charge relay system residues include Asp-160 and His-191. The N-linked (GlcNAc...) asparagine glycan is linked to Asn-252. Catalysis depends on Ser-323, which acts as the Charge relay system. Residues Asn-364 and Asn-373 are each glycosylated (N-linked (GlcNAc...) asparagine).

It belongs to the peptidase S8 family.

It localises to the secreted. Secreted subtilisin-like serine protease with keratinolytic activity that contributes to pathogenicity. The chain is Subtilisin-like protease CPC735_012930 from Coccidioides posadasii (strain C735) (Valley fever fungus).